Reading from the N-terminus, the 168-residue chain is S-ribosylhomocysteine lyase (168 aa).

Residues His-54, His-58, and Cys-128 each contribute to the Fe cation site.

The protein belongs to the LuxS family. Homodimer. Fe cation serves as cofactor.

The enzyme catalyses S-(5-deoxy-D-ribos-5-yl)-L-homocysteine = (S)-4,5-dihydroxypentane-2,3-dione + L-homocysteine. Involved in the synthesis of autoinducer 2 (AI-2) which is secreted by bacteria and is used to communicate both the cell density and the metabolic potential of the environment. The regulation of gene expression in response to changes in cell density is called quorum sensing. Catalyzes the transformation of S-ribosylhomocysteine (RHC) to homocysteine (HC) and 4,5-dihydroxy-2,3-pentadione (DPD). The protein is S-ribosylhomocysteine lyase of Neisseria meningitidis serogroup C / serotype 2a (strain ATCC 700532 / DSM 15464 / FAM18).